Consider the following 293-residue polypeptide: uncharacterized protein (293 aa).

It to M.jannaschii MJ1614 and MJ0008.

This is an uncharacterized protein from Methanocaldococcus jannaschii (strain ATCC 43067 / DSM 2661 / JAL-1 / JCM 10045 / NBRC 100440) (Methanococcus jannaschii).